Reading from the N-terminus, the 258-residue chain is Imidazole glycerol phosphate synthase subunit HisF (258 aa).

Residues D11 and D130 contribute to the active site.

This sequence belongs to the HisA/HisF family. In terms of assembly, heterodimer of HisH and HisF.

The protein localises to the cytoplasm. The catalysed reaction is 5-[(5-phospho-1-deoxy-D-ribulos-1-ylimino)methylamino]-1-(5-phospho-beta-D-ribosyl)imidazole-4-carboxamide + L-glutamine = D-erythro-1-(imidazol-4-yl)glycerol 3-phosphate + 5-amino-1-(5-phospho-beta-D-ribosyl)imidazole-4-carboxamide + L-glutamate + H(+). Its pathway is amino-acid biosynthesis; L-histidine biosynthesis; L-histidine from 5-phospho-alpha-D-ribose 1-diphosphate: step 5/9. In terms of biological role, IGPS catalyzes the conversion of PRFAR and glutamine to IGP, AICAR and glutamate. The HisF subunit catalyzes the cyclization activity that produces IGP and AICAR from PRFAR using the ammonia provided by the HisH subunit. In Lachnoclostridium phytofermentans (strain ATCC 700394 / DSM 18823 / ISDg) (Clostridium phytofermentans), this protein is Imidazole glycerol phosphate synthase subunit HisF.